A 545-amino-acid chain; its full sequence is Hydroxylamine reductase (545 aa).

4 residues coordinate [4Fe-4S] cluster: C3, C6, C15, and C21. Residues H241, E265, C309, C396, C424, C449, E483, and K485 each contribute to the hybrid [4Fe-2O-2S] cluster site. C396 carries the post-translational modification Cysteine persulfide.

This sequence belongs to the HCP family. Requires [4Fe-4S] cluster as cofactor. Hybrid [4Fe-2O-2S] cluster is required as a cofactor.

It localises to the cytoplasm. The enzyme catalyses A + NH4(+) + H2O = hydroxylamine + AH2 + H(+). Its function is as follows. Catalyzes the reduction of hydroxylamine to form NH(3) and H(2)O. The polypeptide is Hydroxylamine reductase (Zymomonas mobilis subsp. mobilis (strain ATCC 31821 / ZM4 / CP4)).